Here is a 254-residue protein sequence, read N- to C-terminus: Triosephosphate isomerase (254 aa).

Residue 9–11 (NWK) participates in substrate binding. H96 (electrophile) is an active-site residue. E169 serves as the catalytic Proton acceptor. Residues G175, S215, and 236–237 (GG) each bind substrate.

It belongs to the triosephosphate isomerase family. Homodimer.

Its subcellular location is the cytoplasm. The catalysed reaction is D-glyceraldehyde 3-phosphate = dihydroxyacetone phosphate. It participates in carbohydrate biosynthesis; gluconeogenesis. It functions in the pathway carbohydrate degradation; glycolysis; D-glyceraldehyde 3-phosphate from glycerone phosphate: step 1/1. Involved in the gluconeogenesis. Catalyzes stereospecifically the conversion of dihydroxyacetone phosphate (DHAP) to D-glyceraldehyde-3-phosphate (G3P). This is Triosephosphate isomerase from Borrelia recurrentis (strain A1).